We begin with the raw amino-acid sequence, 255 residues long: 1-(5-phosphoribosyl)-5-[(5-phosphoribosylamino)methylideneamino] imidazole-4-carboxamide isomerase (255 aa).

The active-site Proton acceptor is the Asp8. Asp129 acts as the Proton donor in catalysis.

Belongs to the HisA/HisF family.

The protein resides in the cytoplasm. It catalyses the reaction 1-(5-phospho-beta-D-ribosyl)-5-[(5-phospho-beta-D-ribosylamino)methylideneamino]imidazole-4-carboxamide = 5-[(5-phospho-1-deoxy-D-ribulos-1-ylimino)methylamino]-1-(5-phospho-beta-D-ribosyl)imidazole-4-carboxamide. Its pathway is amino-acid biosynthesis; L-histidine biosynthesis; L-histidine from 5-phospho-alpha-D-ribose 1-diphosphate: step 4/9. This Prochlorococcus marinus (strain MIT 9303) protein is 1-(5-phosphoribosyl)-5-[(5-phosphoribosylamino)methylideneamino] imidazole-4-carboxamide isomerase.